We begin with the raw amino-acid sequence, 613 residues long: Transcription factor cbf11 (613 aa).

Positions 32–58 (NNGLHNQEDGAGGRNENSERVGSGSPG) are disordered.

This sequence belongs to the Su(H) family.

The protein resides in the cytoplasm. Its subcellular location is the nucleus. In terms of biological role, transcription factor that behaves as a negative regulator of adhesion. Recognizes specifically the canonical CSL response element GTGA/GGAA. May also play a cbf12-antagonistic role in the regulation of a number of other important processes such as extracellular material production, colony morphogenesis, ploidy maintenance, or meiosis. The sequence is that of Transcription factor cbf11 (cbf11) from Schizosaccharomyces pombe (strain 972 / ATCC 24843) (Fission yeast).